A 461-amino-acid polypeptide reads, in one-letter code: Dihydrolipoyl dehydrogenase (461 aa).

FAD-binding positions include 34–42, Lys-51, and Gly-114; that span reads EEDQAGGTC. Cys-42 and Cys-47 are disulfide-bonded. Residues 177-181, Glu-200, and 261-264 contribute to the NAD(+) site; these read GGGVI and AIGR. FAD contacts are provided by Asp-304 and Ala-312. Residue His-436 is the Proton acceptor of the active site.

It belongs to the class-I pyridine nucleotide-disulfide oxidoreductase family. The cofactor is FAD.

The protein localises to the cytoplasm. It catalyses the reaction N(6)-[(R)-dihydrolipoyl]-L-lysyl-[protein] + NAD(+) = N(6)-[(R)-lipoyl]-L-lysyl-[protein] + NADH + H(+). In terms of biological role, the branched-chain alpha-keto dehydrogenase complex catalyzes the overall conversion of alpha-keto acids to acyl-CoA and CO(2). It contains multiple copies of 3 enzymatic components: branched-chain alpha-keto acid decarboxylase (E1), lipoamide acyltransferase (E2) and lipoamide dehydrogenase (E3). In Chlamydia pneumoniae (Chlamydophila pneumoniae), this protein is Dihydrolipoyl dehydrogenase (lpdA).